The following is a 325-amino-acid chain: Diacylglycerol acyltransferase/mycolyltransferase Ag85B (325 aa).

Positions 1 to 38 are cleaved as a signal peptide; it reads MTFIDKIRGHWARRMTVAAVAALLLPGLVGVVGGSATA. Position 82–83 (82–83) interacts with substrate; sequence LR. The segment at 98–108 is fibronectin-binding; it reads FEMFLDSGLSV. The cysteines at positions 127 and 132 are disulfide-linked. Ser-166 lines the substrate pocket. Ser-166 functions as the Nucleophile in the catalytic mechanism. Residue Glu-272 is part of the active site. Residues 274–277 and 304–306 each bind substrate; these read LTIR and HNW. His-304 is a catalytic residue.

This sequence belongs to the mycobacterial A85 antigen family.

The protein resides in the secreted. It carries out the reaction 2 alpha,alpha'-trehalose 6-mycolate = alpha,alpha'-trehalose 6,6'-bismycolate + alpha,alpha-trehalose. The catalysed reaction is an acyl-CoA + a 1,2-diacyl-sn-glycerol = a triacyl-sn-glycerol + CoA. The antigen 85 proteins (FbpA, FbpB, FbpC) are responsible for the high affinity of mycobacteria for fibronectin, a large adhesive glycoprotein. They also help to maintain the integrity of the cell wall by catalyzing the transfer of mycolic acids to cell wall arabinogalactan and through the synthesis of alpha,alpha-trehalose dimycolate (TDM, cord factor). They catalyze the transfer of a mycoloyl residue from one molecule of alpha,alpha-trehalose monomycolate (TMM) to another TMM, leading to the formation of TDM. This is Diacylglycerol acyltransferase/mycolyltransferase Ag85B (fbpB) from Mycolicibacterium smegmatis (strain ATCC 700084 / mc(2)155) (Mycobacterium smegmatis).